The sequence spans 326 residues: Tetraketide alpha-pyrone reductase 1 (326 aa).

Residues 8 to 32, lysine 44, and tyrosine 162 contribute to the NADP(+) site; that span reads VCVT…GYEV.

Belongs to the NAD(P)-dependent epimerase/dehydratase family. Dihydroflavonol-4-reductase subfamily. As to quaternary structure, interacts with 4CLL1/ACOS5, PKSA and PKSB. As to expression, specifically expressed in anther tapetal cells during microspores development.

Its subcellular location is the cytoplasm. The protein resides in the nucleus. It localises to the endoplasmic reticulum. Its function is as follows. Involved in the biosynthesis of hydroxylated tetraketide compounds that serve as sporopollenin precursors (the main constituents of exine). Is essential for pollen wall development. Acts on tetraketide alpha-pyrones and reduces the carbonyl function on the tetraketide alkyl chain to a secondary alcohol function. This Arabidopsis thaliana (Mouse-ear cress) protein is Tetraketide alpha-pyrone reductase 1 (TKPR1).